An 83-amino-acid polypeptide reads, in one-letter code: Conotoxin Im22.1 (83 aa).

Residues 1–18 (MMMRVFIAMFFLLALVEA) form the signal peptide. Residues 19–26 (GWPRLYDK) constitute a propeptide that is removed on maturation.

It belongs to the conotoxin E superfamily. Post-translationally, contain 4 disulfide bonds. Expressed by the venom duct.

The protein resides in the secreted. In terms of biological role, probable neurotoxin. This is Conotoxin Im22.1 from Conus imperialis (Imperial cone).